Reading from the N-terminus, the 283-residue chain is MQQLEKQSDLASWHGRLSLTYEKKAHQTQVQQSYHQAPLNLQRPFYPEGPVCHSVMMHTAGGMVGGDRLSINVTLQPQTHALLTTTSAGKVYRSNGHGAQQTVQCQLDTNAILEWLPLGTIVFDQAQFRQTLQVELGPGAIFCGWDLTRFGRSARGERFMQGDWRSHTEIWQQGAPLWIDRQWLPGQPDIWESPHGLAGQPVVGSFLWVGQGVEPNLVQTARDLWQPTTDGAEMGVTRLPLGLVCRYRGPSSQAARQWFIQVWNLLRSTHLGRPACPPRVWPL.

It belongs to the UreD family. As to quaternary structure, ureD, UreF and UreG form a complex that acts as a GTP-hydrolysis-dependent molecular chaperone, activating the urease apoprotein by helping to assemble the nickel containing metallocenter of UreC. The UreE protein probably delivers the nickel.

The protein localises to the cytoplasm. In terms of biological role, required for maturation of urease via the functional incorporation of the urease nickel metallocenter. In Acaryochloris marina (strain MBIC 11017), this protein is Urease accessory protein UreD.